The following is an 833-amino-acid chain: Leucine--tRNA ligase (833 aa).

A 'HIGH' region motif is present at residues 41 to 52; the sequence is PYPSGAGLHVGH. The 'KMSKS' region motif lies at 610 to 614; sequence KMSKS. Lysine 613 provides a ligand contact to ATP.

The protein belongs to the class-I aminoacyl-tRNA synthetase family.

The protein localises to the cytoplasm. It catalyses the reaction tRNA(Leu) + L-leucine + ATP = L-leucyl-tRNA(Leu) + AMP + diphosphate. The polypeptide is Leucine--tRNA ligase (Streptococcus pyogenes serotype M28 (strain MGAS6180)).